The chain runs to 752 residues: Phosphatidylinositol 4-phosphate 5-kinase 1 (752 aa).

7 MORN repeats span residues 81–103 (YIGSFSGGFPHGSGKYLWKDGCM), 104–126 (YEGDWKRGKASGKGKFSWPSGAT), 127–149 (YEGEFKSGRMEGFGTFTGADGDT), 150–172 (YRGTWVADRKHGHGQKRYANGDF), 173–195 (YEGTWRRNLQDGRGRYVWRNGNQ), 196–218 (YTGEWRSGVISGKGLLVWPNGNR), and 219–241 (YEGLWENGIPKGNGVFTWSDGSS). Positions 349 to 748 (SKGHKKYDLM…RFRDFISRIF (400 aa)) constitute a PIPK domain. An activation loop region spans residues 708–729 (YDITKKIEHAYKSLQADPASIS).

Phosphorylation inactivates the enzyme. Expressed in the whole plant, preferentially in roots. Strongly expressed in meristematic tissues, namely procambial cell layers.

The catalysed reaction is a 1,2-diacyl-sn-glycero-3-phospho-(1D-myo-inositol 4-phosphate) + ATP = a 1,2-diacyl-sn-glycero-3-phospho-(1D-myo-inositol-4,5-bisphosphate) + ADP + H(+). Catalyzes the synthesis of phosphatidylinositol 4,5-bisphosphate and phosphatidylinositol 3,4-bisphosphate. The protein is Phosphatidylinositol 4-phosphate 5-kinase 1 (PIP5K1) of Arabidopsis thaliana (Mouse-ear cress).